A 279-amino-acid chain; its full sequence is MRDLQARIIHELNVRATIDPAAEVVERVDFLVRYVRAAGASGFVLGVSGGQDSSLAGRLCQLAVERLAEQGVAAEFIAVRLPYAVQNDEDDAQLALSFIRPERTVAVNIQRGVEGVGNEYRDALGEDMTDFAKGNVKARVRMVAQYAIAGQRRLLVVGTDHAAEAVTGFYTKYGDGGADLLPLSGLSKRQGRALLQHLGAPARLYEKAPTADLLDQSPGQTDEANLGLRYSDIDDFLEGKDVAEKVAIAIEARYLATEHKRRVPASMFDDWWTGGGFGR.

Position 46-53 (46-53) interacts with ATP; it reads GVSGGQDS. Asp-52 is a binding site for Mg(2+). Arg-139 is a binding site for deamido-NAD(+). Residue Thr-159 participates in ATP binding. A Mg(2+)-binding site is contributed by Glu-164. Residues Lys-172 and Asp-179 each contribute to the deamido-NAD(+) site. The ATP site is built by Lys-188 and Thr-210. A deamido-NAD(+)-binding site is contributed by 259 to 260; it reads HK.

This sequence belongs to the NAD synthetase family. In terms of assembly, homodimer.

It carries out the reaction deamido-NAD(+) + NH4(+) + ATP = AMP + diphosphate + NAD(+) + H(+). It functions in the pathway cofactor biosynthesis; NAD(+) biosynthesis; NAD(+) from deamido-NAD(+) (ammonia route): step 1/1. Functionally, catalyzes the ATP-dependent amidation of deamido-NAD to form NAD. Uses ammonia as a nitrogen source. In Leifsonia xyli subsp. xyli (strain CTCB07), this protein is NH(3)-dependent NAD(+) synthetase.